The chain runs to 248 residues: Probable transcriptional regulatory protein MCA1220 (248 aa).

The protein belongs to the TACO1 family.

It is found in the cytoplasm. In Methylococcus capsulatus (strain ATCC 33009 / NCIMB 11132 / Bath), this protein is Probable transcriptional regulatory protein MCA1220.